Consider the following 123-residue polypeptide: Small ribosomal subunit protein uS12 (123 aa).

The segment at 1 to 45 (MPTINQLIRKKRQSGATRKKSPALQKSPQKRGVCLQVKTKTPKKP) is disordered. Over residues 8-21 (IRKKRQSGATRKKS) the composition is skewed to basic residues.

Belongs to the universal ribosomal protein uS12 family. As to quaternary structure, part of the 30S ribosomal subunit. Contacts proteins S8 and S17. May interact with IF1 in the 30S initiation complex.

With S4 and S5 plays an important role in translational accuracy. Functionally, interacts with and stabilizes bases of the 16S rRNA that are involved in tRNA selection in the A site and with the mRNA backbone. Located at the interface of the 30S and 50S subunits, it traverses the body of the 30S subunit contacting proteins on the other side and probably holding the rRNA structure together. The combined cluster of proteins S8, S12 and S17 appears to hold together the shoulder and platform of the 30S subunit. This Chlamydia muridarum (strain MoPn / Nigg) protein is Small ribosomal subunit protein uS12.